The chain runs to 687 residues: Phage-like element PBSX protein XkdV (687 aa).

To B.subtilis YqcC.

This Bacillus subtilis (strain 168) protein is Phage-like element PBSX protein XkdV (xkdV).